Here is a 146-residue protein sequence, read N- to C-terminus: Gonadotropin subunit beta-2 (146 aa).

An N-terminal signal peptide occupies residues M1–S22. Intrachain disulfides connect C37–C85, C51–C100, C54–C138, C62–C116, C66–C118, and C121–C128. N-linked (GlcNAc...) asparagine glycosylation occurs at N41.

Belongs to the glycoprotein hormones subunit beta family. In terms of assembly, heterodimer of an alpha and a beta chain.

It localises to the secreted. Involved in gametogenesis and steroidogenesis. The polypeptide is Gonadotropin subunit beta-2 (cgbb) (Trichopodus trichopterus (Three spot gourami)).